The primary structure comprises 818 residues: Response regulator SSK1 (818 aa).

The region spanning 611-769 is the Response regulatory domain; the sequence is NVLIVEDNPI…WLERKVMEWG (159 aa). Residue aspartate 660 is modified to 4-aspartylphosphate.

Belongs to the SSK1 family.

The protein localises to the cytoplasm. Its function is as follows. Two-domain response regulator protein in the two-component signal transduction system of the HOG1 pathway. Modulates stress response, melanin biosynthesis and virulence via its regulation of the phosphorylation of HOG1. The polypeptide is Response regulator SSK1 (Verticillium dahliae (strain VdLs.17 / ATCC MYA-4575 / FGSC 10137) (Verticillium wilt)).